Here is a 244-residue protein sequence, read N- to C-terminus: Ureidoacrylate amidohydrolase RutB (244 aa).

The Proton acceptor role is filled by aspartate 38. Residue lysine 147 is part of the active site. The Nucleophile role is filled by cysteine 180.

Belongs to the isochorismatase family. RutB subfamily.

It carries out the reaction (Z)-3-ureidoacrylate + H2O + H(+) = (Z)-3-aminoacrylate + NH4(+) + CO2. The catalysed reaction is (Z)-3-ureidoacrylate + H2O = (Z)-3-aminoacrylate + carbamate + H(+). The enzyme catalyses (Z)-2-methylureidoacrylate + H2O + H(+) = (Z)-2-methylaminoacrylate + NH4(+) + CO2. In terms of biological role, hydrolyzes ureidoacrylate to form aminoacrylate and carbamate. The carbamate hydrolyzes spontaneously, thereby releasing one of the nitrogen atoms of the pyrimidine ring as ammonia and one of its carbon atoms as CO2. This chain is Ureidoacrylate amidohydrolase RutB, found in Shigella flexneri serotype X (strain 2002017).